Reading from the N-terminus, the 462-residue chain is Probable peptidoglycan glycosyltransferase FtsW (462 aa).

The segment at 1 to 28 (MREPRHVPQLRASGRRFPQRGRRHRFGK) is disordered. Topologically, residues 1 to 92 (MREPRHVPQL…RSRMLDFDYS (92 aa)) are cytoplasmic. A compositionally biased stretch (basic residues) spans 13–27 (SGRRFPQRGRRHRFG). Residues 93–113 (LLWVSIALLGLGVVMVYSASI) traverse the membrane as a helical segment. Over 114–127 (AMPDSPKYASYHDY) the chain is Periplasmic. The helical transmembrane segment at 128–148 (AFLLRHCVSLVVAFVAAVIAF) threads the bilayer. Residues 149–158 (RVPVSTWDKY) lie on the Cytoplasmic side of the membrane. Residues 159–179 (APHLFLIALVGLVIVLIPHIG) traverse the membrane as a helical segment. At 180–192 (KGVNGARRWIPLG) the chain is on the periplasmic side. A helical membrane pass occupies residues 193–215 (ITNMQPSEIMKLAVTIYAANYTV). Topologically, residues 216–223 (RKQEYMQS) are cytoplasmic. The chain crosses the membrane as a helical span at residues 224 to 244 (FAKGFLPMAFAVGLVGALLLL). The Periplasmic segment spans residues 245–247 (EPD). A helical transmembrane segment spans residues 248–268 (MGAFMVVAAIAMGVLFLGGVN). Residues 269–270 (GK) lie on the Cytoplasmic side of the membrane. The chain crosses the membrane as a helical span at residues 271 to 291 (LFGGLVATAVGTFTMLVWLSP). Residues 292–349 (WRRERIFAYLDPWDERYAQGKAYQLTHSLIAFGRGEWFGVGLGGSVEKLNYLPEAHTD) are Periplasmic-facing. Residues 350-370 (FILAVIGEELGFVGVLVVILL) traverse the membrane as a helical segment. Topologically, residues 371 to 398 (FYWIVRRSFEIGRQALALDRTFAGLMAK) are cytoplasmic. A helical transmembrane segment spans residues 399–419 (GVGIWFGAQAFINMGVNLGLL). Residues 420–425 (PTKGLT) are Periplasmic-facing. Residues 426–446 (LPLVSYGGSGILLNCISLAVL) traverse the membrane as a helical segment. The Cytoplasmic segment spans residues 447–462 (LRVDYENRVLMRGGKV).

The protein belongs to the SEDS family. FtsW subfamily.

Its subcellular location is the cell inner membrane. It carries out the reaction [GlcNAc-(1-&gt;4)-Mur2Ac(oyl-L-Ala-gamma-D-Glu-L-Lys-D-Ala-D-Ala)](n)-di-trans,octa-cis-undecaprenyl diphosphate + beta-D-GlcNAc-(1-&gt;4)-Mur2Ac(oyl-L-Ala-gamma-D-Glu-L-Lys-D-Ala-D-Ala)-di-trans,octa-cis-undecaprenyl diphosphate = [GlcNAc-(1-&gt;4)-Mur2Ac(oyl-L-Ala-gamma-D-Glu-L-Lys-D-Ala-D-Ala)](n+1)-di-trans,octa-cis-undecaprenyl diphosphate + di-trans,octa-cis-undecaprenyl diphosphate + H(+). Its pathway is cell wall biogenesis; peptidoglycan biosynthesis. Peptidoglycan polymerase that is essential for cell division. The protein is Probable peptidoglycan glycosyltransferase FtsW of Burkholderia thailandensis (strain ATCC 700388 / DSM 13276 / CCUG 48851 / CIP 106301 / E264).